A 372-amino-acid chain; its full sequence is DNA polymerase delta subunit 3 (372 aa).

Disordered regions lie at residues 156-264 (KKAP…NLDS) and 352-372 (KKNT…FGKK). Positions 160-173 (STHSPQLSVPSKTS) are enriched in polar residues. At S163 the chain carries Phosphoserine. Basic and acidic residues-rich tracts occupy residues 174–190 (TIDK…KGKD) and 209–239 (APLE…DDLK). Positions 355–365 (TAQSKPQQKSI) are enriched in polar residues.

In terms of assembly, heterotetramer that consist of the pol3, cdc1, cdc27 and cdm1 subunits. Cdc27 interacts with cdc1 and is required for dimerization of the tetramer.

It localises to the nucleus. This Schizosaccharomyces pombe (strain 972 / ATCC 24843) (Fission yeast) protein is DNA polymerase delta subunit 3 (cdc27).